Reading from the N-terminus, the 626-residue chain is SHC-transforming protein 4 (626 aa).

A CH2 region spans residues 1–185 (MRERSQDSQA…KQDGPPLQHL (185 aa)). Disordered stretches follow at residues 38 to 76 (ITSL…TVSS) and 119 to 182 (LQEN…GPPL). The segment covering 120–139 (QENQDQTPSRPASPESNLNR) has biased composition (polar residues). A PID domain is found at 186–369 (LGNGLNYCVR…LVDGAPEDRD (184 aa)). A CH1 region spans residues 370–521 (HDYYNSIPGK…HIRQQLWDEE (152 aa)). Tyrosine 422 bears the Phosphotyrosine mark. An SH2 domain is found at 522–613 (CFHGKLSRGA…GSEVRLKQPI (92 aa)).

Interacts (via PID domain) with phosphorylated MUSK (via NPXY motif); undergoes tyrosine phosphorylation downstream of activated MUSK. Interacts with GRB2; the interaction is dependent of Tyr-422 phosphorylation and increased by EGF. In terms of processing, phosphorylated; the phosphorylation is enhanced by EGF. Phosphorylation at Tyr-422 is required for the interaction with GRB2. Expressed in both brain and skeletal muscle; widely expressed in brain namely olfactory bulb, cortex, hippocampus, striatum, thalamus, and brain stem (at protein level). Only expressed in melanomas. Weakly expressed in normal melanocytes and benign nevi. Highly expressed at the transition from radial growth phase to vertical growth phase and metastatic melanomas, when tumor cells acquire migratory competence and invasive potential.

Its subcellular location is the postsynaptic cell membrane. In terms of biological role, activates both Ras-dependent and Ras-independent migratory pathways in melanomas. Contributes to the early phases of agrin-induced tyrosine phosphorylation of CHRNB1. The sequence is that of SHC-transforming protein 4 (Shc4) from Mus musculus (Mouse).